Here is a 256-residue protein sequence, read N- to C-terminus: DNA repair protein RecO (256 aa).

Belongs to the RecO family.

Functionally, involved in DNA repair and RecF pathway recombination. The protein is DNA repair protein RecO of Streptococcus pneumoniae (strain Hungary19A-6).